We begin with the raw amino-acid sequence, 198 residues long: Probable chorismate pyruvate-lyase (198 aa).

3 residues coordinate substrate: R73, L111, and E172.

This sequence belongs to the UbiC family.

Its subcellular location is the cytoplasm. The catalysed reaction is chorismate = 4-hydroxybenzoate + pyruvate. Its pathway is cofactor biosynthesis; ubiquinone biosynthesis. Functionally, removes the pyruvyl group from chorismate, with concomitant aromatization of the ring, to provide 4-hydroxybenzoate (4HB) for the ubiquinone pathway. The chain is Probable chorismate pyruvate-lyase from Burkholderia orbicola (strain AU 1054).